Here is a 290-residue protein sequence, read N- to C-terminus: MNFIIATRRSKLAQVQTEIIIDLLNKKHDIECEKLLIETVGDKILEVSLDKIGGKGLFVKDIEVAMLEQRADAAVHSMKDVPYEMPKGFEIIAIPKREDVRDAFISLDNIKFKDLRKGAKIGTSSRRRAAQLKLLRPDLDIVPIRGNVQTRIEKIKKENLDGIILAVAGLKRVNLEHLITDYFDTKEMVPAIGQGALGIEVMEEHPKKELFKDLDHYNSKICVLAERAFMRELDGDCHSTIGAYASIKDNIMHIIGIFERKNKIIKKEITGTKDQYEKLGIALAEHILKD.

Position 237 is an S-(dipyrrolylmethanemethyl)cysteine (C237).

This sequence belongs to the HMBS family. Monomer. Dipyrromethane serves as cofactor.

It carries out the reaction 4 porphobilinogen + H2O = hydroxymethylbilane + 4 NH4(+). It functions in the pathway porphyrin-containing compound metabolism; protoporphyrin-IX biosynthesis; coproporphyrinogen-III from 5-aminolevulinate: step 2/4. Tetrapolymerization of the monopyrrole PBG into the hydroxymethylbilane pre-uroporphyrinogen in several discrete steps. This Clostridium botulinum (strain Langeland / NCTC 10281 / Type F) protein is Porphobilinogen deaminase.